The primary structure comprises 142 residues: Transcriptional regulator MraZ (142 aa).

2 SpoVT-AbrB domains span residues 5 to 51 and 77 to 120; these read ASSL…PRTE and AMDV…DKAT.

The protein belongs to the MraZ family. Forms oligomers.

The protein resides in the cytoplasm. The protein localises to the nucleoid. In Delftia acidovorans (strain DSM 14801 / SPH-1), this protein is Transcriptional regulator MraZ.